The chain runs to 223 residues: Ribonuclease 3 (223 aa).

The region spanning 3-125 is the RNase III domain; that stretch reads LERLQKKLGY…IIAAIYLDAG (123 aa). E38 serves as a coordination point for Mg(2+). D42 is a catalytic residue. The Mg(2+) site is built by D111 and E114. The active site involves E114. Residues 152 to 222 enclose the DRBM domain; it reads DPKTRLQEFL…AEQVLAKLTT (71 aa).

This sequence belongs to the ribonuclease III family. As to quaternary structure, homodimer. Requires Mg(2+) as cofactor.

The protein localises to the cytoplasm. It carries out the reaction Endonucleolytic cleavage to 5'-phosphomonoester.. Functionally, digests double-stranded RNA. Involved in the processing of primary rRNA transcript to yield the immediate precursors to the large and small rRNAs (23S and 16S). Processes some mRNAs, and tRNAs when they are encoded in the rRNA operon. Processes pre-crRNA and tracrRNA of type II CRISPR loci if present in the organism. The sequence is that of Ribonuclease 3 from Actinobacillus pleuropneumoniae serotype 3 (strain JL03).